A 512-amino-acid polypeptide reads, in one-letter code: Polyamine aminopropyltransferase (512 aa).

A run of 7 helical transmembrane segments spans residues 19–39 (IVSICGIIFEVLFGALGSYIL), 48–68 (LTISLFLTGMGIGASLSEKFM), 76–96 (VWIEFCVALIGGFSSFIMFGI), 108–128 (YLYSITLIIGALTGVELPILI), 151–171 (AGGLIGGVLFVFLFRPYFGMV), 172–192 (KTAFLVGLINLTVALIVLWLF), and 199–219 (FIVHAVIGGVIGVLLIAGLFF). A PABS domain is found at 215 to 450 (AGLFFGEEMA…GNWGFVMASR (236 aa)). Positions 217-457 (LFFGEEMAFN…ASREEIDLDI (241 aa)) are spermidine synthase. S-methyl-5'-thioadenosine is bound at residue Gln-245. The spermidine site is built by His-275 and Asp-299. Residues Asp-319 and 353–354 (DA) each bind S-methyl-5'-thioadenosine. Asp-371 (proton acceptor) is an active-site residue.

The protein belongs to the spermidine/spermine synthase family. Homodimer or homotetramer.

Its subcellular location is the cell membrane. The enzyme catalyses S-adenosyl 3-(methylsulfanyl)propylamine + putrescine = S-methyl-5'-thioadenosine + spermidine + H(+). The protein operates within amine and polyamine biosynthesis; spermidine biosynthesis; spermidine from putrescine: step 1/1. Its function is as follows. Catalyzes the irreversible transfer of a propylamine group from the amino donor S-adenosylmethioninamine (decarboxy-AdoMet) to putrescine (1,4-diaminobutane) to yield spermidine. In Oceanobacillus iheyensis (strain DSM 14371 / CIP 107618 / JCM 11309 / KCTC 3954 / HTE831), this protein is Polyamine aminopropyltransferase.